The following is a 2227-amino-acid chain: Genome polyprotein (2227 aa).

Short sequence motifs ((L)YPX(n)L motif) lie at residues 167–171 and 200–205; these read YPHGL and YPVWEL. The involved in P1-2A pentamerization stretch occupies residues 766-836; it reads MMSRIAAGDL…PRKMKGLFSQ (71 aa). A helical transmembrane segment spans residues 1011–1031; it reads TVEIINTVLCFVKSGILLYVI. Positions 1043–1070 are membrane-penetrating ability; that stretch reads IGLLRVMNYADIGCSVISCGKVFSKMLE. Residues 1127–1152 are a coiled coil; the sequence is KKKDILNILKDNQQKIEKAIEEADNF. In terms of domain architecture, SF3 helicase spans 1204 to 1366; it reads HQKLKNLGSI…SFFKNPHNDM (163 aa). ATP is bound at residue 1230 to 1237; the sequence is GKRGGGKS. A helical membrane pass occupies residues 1462–1482; the sequence is WVAVGAAVGILGVLVGGWFVY. At Tyr1499 the chain carries O-(5'-phospho-RNA)-tyrosine. The 215-residue stretch at 1514-1728 folds into the Peptidase C3 domain; it reads DPVESQSTLE…VAKLVTQEMF (215 aa). Active-site for protease 3C activity residues include His1563, Asp1603, and Cys1691. Residues 1976 to 2097 enclose the RdRp catalytic domain; that stretch reads DVGLDLDFSA…VFSRDVQIDN (122 aa).

The protein belongs to the picornaviridae polyprotein family. Homodimer. Homomultimer; probably interacts with membranes in a multimeric form. Seems to assemble into amyloid-like fibers. In terms of assembly, homodimer. Monomer. Interacts with protein 3CD. As to quaternary structure, interacts with host ACBD3. Interacts with protein 3AB. In terms of assembly, interacts with human MAVS. As to quaternary structure, homodimer; disulfide-linked. Homopentamer. Homooligomer. In terms of assembly, interacts with capsid protein VP2. Interacts with capsid protein VP3. As to quaternary structure, interacts with capsid protein VP1. Interacts with capsid protein VP3. Interacts with capsid protein VP1. Interacts with capsid protein VP2. Post-translationally, specific enzymatic cleavages by viral protease in vivo yield a variety of precursors and mature proteins. Polyprotein processing intermediates are produced, such as P1-2A which is a functional precursor of the structural proteins, VP0 which is a VP4-VP2 precursor, VP1-2A precursor, 3ABC precursor which is a stable and catalytically active precursor of 3A, 3B and 3C proteins, 3AB and 3CD precursors. The assembly signal 2A is removed from VP1-2A by a host protease, possibly host Cathepsin L. This cleavage occurs over a region of 3 amino-acids probably generating VP1 proteins with heterogeneous C-termini. During virion maturation, immature virions are rendered infectious following cleavage of VP0 into VP4 and VP2. This maturation seems to be an autocatalytic event triggered by the presence of RNA in the capsid and is followed by a conformational change of the particle. In terms of processing, the assembly signal 2A is removed from VP1-2A by a host protease, possibly host Cathepsin L in naked virions. This cleavage does not occur in enveloped virions. This cleavage occurs over a region of 3 amino-acids probably generating VP1 proteins with heterogeneous C-termini. Post-translationally, VPg is uridylylated prior to priming replication into VPg-pUpU. Unlike other picornaviruses, does not seem to be myristoylated.

The protein resides in the virion. It is found in the host endosome. Its subcellular location is the host multivesicular body. It localises to the host membrane. The protein localises to the host mitochondrion outer membrane. The protein resides in the host cytoplasm. It is found in the host cytoplasmic vesicle membrane. It catalyses the reaction RNA(n) + a ribonucleoside 5'-triphosphate = RNA(n+1) + diphosphate. It carries out the reaction a ribonucleoside 5'-triphosphate + H2O = a ribonucleoside 5'-diphosphate + phosphate + H(+). The enzyme catalyses Selective cleavage of Gln-|-Gly bond in the poliovirus polyprotein. In other picornavirus reactions Glu may be substituted for Gln, and Ser or Thr for Gly.. Capsid proteins VP1, VP2, and VP3 form a closed capsid enclosing the viral positive strand RNA genome. All these proteins contain a beta-sheet structure called beta-barrel jelly roll. Together they form an icosahedral capsid (T=3) composed of 60 copies of each VP1, VP2, and VP3, with a diameter of approximately 300 Angstroms. VP1 is situated at the 12 fivefold axes, whereas VP2 and VP3 are located at the quasi-sixfold axes. The naked capsid interacts with the host receptor HAVCR1 to provide virion attachment to and probably entry into the target cell. In terms of biological role, VP0 precursor is a component of the immature procapsids. Its function is as follows. Plays a role in the assembly of the 12 pentamers into an icosahedral structure. Has not been detected in mature virions, supposedly owing to its small size. Functionally, precursor component of immature procapsids that corresponds to an extended form of the structural protein VP1. After maturation, possibly by the host Cathepsin L, the assembly signal 2A is cleaved to give rise to the mature VP1 protein. Functions as a viroporin. Affects membrane integrity and causes an increase in membrane permeability. Involved in host intracellular membrane rearrangements probably to give rise to the viral factories. Does not disrupt calcium homeostasis or glycoprotein trafficking. Antagonizes the innate immune response of the host by suppressing IFN-beta synthesis, which it achieves by interfering with the RIG-I/IFIH1 pathway. In terms of biological role, affects membrane integrity and causes an increase in membrane permeability. Its function is as follows. Associates with and induces structural rearrangements of intracellular membranes. Displays RNA-binding activity. Functionally, the precursor 3ABC is targeted to the mitochondrial membrane where protease 3C activity cleaves and inhibits the host antiviral protein MAVS, thereby disrupting activation of IRF3 through the IFIH1/MDA5 pathway. In vivo, the protease activity of 3ABC precursor is more efficient in cleaving the 2BC precursor than that of protein 3C. The 3ABC precursor may therefore play a role in the proteolytic processing of the polyprotein. Possible viroporin. Interacts with the 3CD precursor and with RNA structures found at both the 5'- and 3'-termini of the viral genome. Since the 3AB precursor contains the hydrophobic domain 3A, it probably anchors the whole viral replicase complex to intracellular membranes on which viral RNA synthesis occurs. In terms of biological role, may serve as membrane anchor to the 3AB and 3ABC precursors via its hydrophobic domain. May interact with RNA. Its function is as follows. Acts as a primer for viral RNA replication and remains covalently bound to viral genomic RNA. VPg is uridylylated prior to priming replication into VPg-pUpU. The VPg-pUpU is then used as primer on the genomic RNA poly(A) by the RNA-dependent RNA polymerase to replicate the viral genome. Functionally, cysteine protease that generates mature viral proteins from the precursor polyprotein. In addition to its proteolytic activity, it binds to viral RNA, and thus influences viral genome replication. RNA and substrate bind cooperatively to the protease. Cleaves IKBKG/NEMO to impair innate immune signaling. Cleaves host PABPC1 which may participate in the switch of viral translation to RNA synthesis. Interacts with the 3AB precursor and with RNA structures found at both the 5'- and 3'-termini of the viral genome. Disrupts TLR3 signaling by degrading the host adapter protein TICAM1/TRIF. In terms of biological role, RNA-directed RNA polymerase 3D-POL replicates genomic and antigenomic RNA by recognizing replications specific signals. The chain is Genome polyprotein from Human hepatitis A virus genotype IA (isolate H2) (HHAV).